The following is a 331-amino-acid chain: 6-phosphogluconolactonase (331 aa).

It belongs to the cycloisomerase 2 family.

The catalysed reaction is 6-phospho-D-glucono-1,5-lactone + H2O = 6-phospho-D-gluconate + H(+). Its pathway is carbohydrate degradation; pentose phosphate pathway; D-ribulose 5-phosphate from D-glucose 6-phosphate (oxidative stage): step 2/3. Functionally, catalyzes the hydrolysis of 6-phosphogluconolactone to 6-phosphogluconate. In Buchnera aphidicola subsp. Baizongia pistaciae (strain Bp), this protein is 6-phosphogluconolactonase.